The chain runs to 269 residues: Small ribosomal subunit protein uS2 (269 aa).

This sequence belongs to the universal ribosomal protein uS2 family.

This chain is Small ribosomal subunit protein uS2 (rpsB), found in Synechocystis sp. (strain ATCC 27184 / PCC 6803 / Kazusa).